Here is a 285-residue protein sequence, read N- to C-terminus: 1-acyl-sn-glycerol-3-phosphate acyltransferase alpha (285 aa).

The N-terminal stretch at M1–S28 is a signal peptide. Over A29–K34 the chain is Lumenal. The helical transmembrane segment at M35–V55 threads the bilayer. The Cytoplasmic portion of the chain corresponds to R56–R124. The short motif at H101–D106 is the HXXXXD motif element. Residues E125–D145 traverse the membrane as a helical segment. At R146 to R189 the chain is on the lumenal side. An EGTR motif motif is present at residues E175 to R178.

The protein belongs to the 1-acyl-sn-glycerol-3-phosphate acyltransferase family. As to expression, widely expressed.

It is found in the endoplasmic reticulum membrane. It carries out the reaction a 1-acyl-sn-glycero-3-phosphate + an acyl-CoA = a 1,2-diacyl-sn-glycero-3-phosphate + CoA. The catalysed reaction is 1-(9Z-octadecenoyl)-sn-glycero-3-phosphate + (9Z)-octadecenoyl-CoA = 1,2-di-(9Z-octadecenoyl)-sn-glycero-3-phosphate + CoA. It catalyses the reaction 1-(9Z-octadecenoyl)-sn-glycero-3-phosphate + hexadecanoyl-CoA = 1-(9Z)-octadecenoyl-2-hexadecanoyl-sn-glycero-3-phosphate + CoA. The enzyme catalyses heptadecanoyl-CoA + 1-(9Z-octadecenoyl)-sn-glycero-3-phosphate = 1-(9Z)-octadecenoyl-2-heptadecanoyl-sn-glycero-3-phosphate + CoA. It carries out the reaction 1-(9Z-octadecenoyl)-sn-glycero-3-phosphate + octadecanoyl-CoA = 1-(9Z-octadecenoyl)-2-octadecanoyl-sn-glycero-3-phosphate + CoA. The catalysed reaction is 1-(9Z-octadecenoyl)-sn-glycero-3-phosphate + (9Z,12Z)-octadecadienoyl-CoA = 1-(9Z)-octadecenoyl-2-(9Z,12Z)-octadecadienoyl-sn-glycero-3-phosphate + CoA. It catalyses the reaction 1-(9Z-octadecenoyl)-sn-glycero-3-phosphate + tetradecanoyl-CoA = 1-(9Z)-octadecenoyl-2-tetradecanoyl-sn-glycero-3-phosphate + CoA. The enzyme catalyses pentadecanoyl-CoA + 1-(9Z-octadecenoyl)-sn-glycero-3-phosphate = 1-(9Z)-octadecenoyl-2-pentadecanoyl-sn-glycero-3-phosphate + CoA. It carries out the reaction 1-hexadecanoyl-sn-glycero-3-phosphate + (9Z)-octadecenoyl-CoA = 1-hexadecanoyl-2-(9Z-octadecenoyl)-sn-glycero-3-phosphate + CoA. The catalysed reaction is 1-(9Z,12Z,15Z)-octadecatrienoyl-sn-glycero-3-phosphate + (9Z)-octadecenoyl-CoA = 1-(9Z,12Z,15Z)-octadecatrienoyl-2-(9Z)-octadecenoyl-sn-glycero-3-phosphate + CoA. It catalyses the reaction 1-(6Z,9Z,12Z-octadecatrienoyl)-sn-glycero-3-phosphate + (9Z)-octadecenoyl-CoA = (6Z,9Z,12Z)-octadecatrienoyl-2-(9Z)-octadecenoyl-sn-glycero-3-phosphate + CoA. The enzyme catalyses 1-eicosanoyl-sn-glycero-3-phosphate + (9Z)-octadecenoyl-CoA = 1-eicosanoyl-2-(9Z)-octadecenoyl-sn-glycero-3-phosphate + CoA. It carries out the reaction 1-tetradecanoyl-sn-glycerol 3-phosphate + (9Z)-octadecenoyl-CoA = 1-tetradecanoyl-2-(9Z)-octadecenoyl-sn-glycero-3-phosphate + CoA. The catalysed reaction is 1-(9Z-octadecenoyl)-sn-glycero-3-phosphate + (5Z,8Z,11Z,14Z)-eicosatetraenoyl-CoA = 1-(9Z)-octadecenoyl-2-(5Z,8Z,11Z,14Z)-eicosatetraenoyl-sn-glycero-3-phosphate + CoA. It catalyses the reaction 1-(9Z-octadecenoyl)-sn-glycero-3-phosphate + dodecanoyl-CoA = 1-(9Z)-octadecenoyl-2-dodecanoyl-sn-glycero-3-phosphate + CoA. The enzyme catalyses (6Z)-octadecenoyl-CoA + 1-(9Z-octadecenoyl)-sn-glycero-3-phosphate = 1-(9Z)-octadecenoyl-2-(6Z)-octadecenoyl-sn-glycero-3-phosphate + CoA. It carries out the reaction (11Z)-octadecenoyl-CoA + 1-(9Z-octadecenoyl)-sn-glycero-3-phosphate = 1-(9Z)-octadecenoyl-2-(11Z)-octadecenoyl-sn-glycero-3-phosphate + CoA. The catalysed reaction is (9Z)-hexadecenoyl-CoA + 1-(9Z-octadecenoyl)-sn-glycero-3-phosphate = 1-(9Z-octadecenoyl)-2-(9Z-hexadecenoyl)-sn-glycero-3-phosphate + CoA. It functions in the pathway phospholipid metabolism; CDP-diacylglycerol biosynthesis; CDP-diacylglycerol from sn-glycerol 3-phosphate: step 2/3. Converts 1-acyl-sn-glycerol-3-phosphate (lysophosphatidic acid or LPA) into 1,2-diacyl-sn-glycerol-3-phosphate (phosphatidic acid or PA) by incorporating an acyl moiety at the sn-2 position of the glycerol backbone. The sequence is that of 1-acyl-sn-glycerol-3-phosphate acyltransferase alpha (Agpat1) from Mus musculus (Mouse).